The chain runs to 85 residues: Small ribosomal subunit protein bS20 (85 aa).

The interval 1–24 is disordered; it reads MANIKSAIKRAKLSEERRSHNASI.

The protein belongs to the bacterial ribosomal protein bS20 family.

Its function is as follows. Binds directly to 16S ribosomal RNA. This chain is Small ribosomal subunit protein bS20, found in Bacillus mycoides (strain KBAB4) (Bacillus weihenstephanensis).